The sequence spans 921 residues: MSKIRVSNLAEKLGLEHKEVLARLKEIGVDAKTATSLVDEDVLKKLMPSLSPDGAEEVRVTTTIIRRRAKAAPVVEPAPAAVAESLEEKPAEPVAPAAPTPPEVPAAAPAPPKAAAAPAEAATMNARIIAPPPAPVETAAPVAAAPVAAATAPPEKALPTPPVVEAPVVEAKPEPVVEKPKVPAQPDKPSANQARILGRMEIPGVTTRPTRVVRRDGTVAPAAEHAQRRPSPAAGAPSRGAAPDRSRMKPATLPPSAPPAADDRRKFGGKSAAPHSEGAGKGGKKGGASTAKKKEQPKKHEILEKRERVFDPVYRGSRKKVKERASETRKTEITIPKAIKRIIKISETISVGELAKRMGIKANDLIKSLMKMGMMVTINHALDFETTVILASEYGYEVENMAVDLDEILESTPDAPETLVKRPPVVTIMGHVDHGKTSLLDAIREANVIAGEAGGITQHIGAYDVELNGRKITFLDTPGHEAFTAMRARGAKVTDIVILVVAADDGVMPQTREAINHSKAAGVPIVVAINKIDKPEAKPERVKQELMEFGLVASEWGGDATMVEVSAKKRLNLEGLLEMVLLQADLMELKANPDKEAKGTIVEAKLDRGRGPVATVLVQEGTLKNGDYCVVGVHSGRVRAIHNDRGEKVNEAGPSMPVEVIGLSGVPDAGDVFVSLKDEKQAKEIATLRQIKQREIEMAKHSKVTLEDLYKQIQSGDVKDLNVIVKGDVQGSVEVVSDSFRKLSTDAVRLNVIHSGVGAITETDVNLAAASNTIIIGFNVRPEVKAQAMAEKEGVDIRLYSIIYDAVEDVKKAMEGLLDPTLKEKYLGRAEIREVFSVPKIGNIAGSYVQDGKMLRNAQARLLRDNVVIYEGKLSSLRRIKDDVKEVAAGYECGIGLENYNNIRIGDIIEAFEIEKVATKL.

Disordered regions lie at residues Ala81–Pro118, Pro175–Ala194, and Val219–Glu301. Residues Pro96–Pro112 are compositionally biased toward pro residues. The segment covering Arg229 to Ala241 has biased composition (low complexity). Residues Lys292–Glu301 show a composition bias toward basic and acidic residues. One can recognise a tr-type G domain in the interval Lys421–Lys590. The interval Gly430–Thr437 is G1. Gly430–Thr437 serves as a coordination point for GTP. Positions Gly455–His459 are G2. Positions Asp476–Gly479 are G3. Residues Asp476 to His480 and Asn530 to Asp533 contribute to the GTP site. The interval Asn530–Asp533 is G4. The interval Ser566–Lys568 is G5.

This sequence belongs to the TRAFAC class translation factor GTPase superfamily. Classic translation factor GTPase family. IF-2 subfamily.

It is found in the cytoplasm. Functionally, one of the essential components for the initiation of protein synthesis. Protects formylmethionyl-tRNA from spontaneous hydrolysis and promotes its binding to the 30S ribosomal subunits. Also involved in the hydrolysis of GTP during the formation of the 70S ribosomal complex. The sequence is that of Translation initiation factor IF-2 from Pelobacter propionicus (strain DSM 2379 / NBRC 103807 / OttBd1).